We begin with the raw amino-acid sequence, 511 residues long: Adenosine deaminase 2 (511 aa).

An N-terminal signal peptide occupies residues 1 to 29 (MLVDGPSERPALCFLLLAVAMSFFGSALS). A dimerization region spans residues 30 to 100 (IDETRAHLLL…HLIERSQVFN (71 aa)). The Zn(2+) site is built by histidine 112 and histidine 114. Aspartate 115 contributes to the substrate binding site. Asparagine 127 carries N-linked (GlcNAc...) asparagine glycosylation. The tract at residues 127-185 (NVTYRPHCHICFTPRGIMQFRFAHPTPRPSEKCSKWILLEDYRKRVQNVTEFDDSLLRN) is PRB domain. A disulfide bridge links cysteine 137 with cysteine 159. 2 N-linked (GlcNAc...) asparagine glycosylation sites follow: asparagine 174 and asparagine 185. Substrate-binding positions include 204–211 (WSKFETIF), histidine 293, and glycine 326. Residue histidine 356 coordinates Zn(2+). Glutamate 359 functions as the Proton donor in the catalytic mechanism. An N-linked (GlcNAc...) asparagine glycan is attached at asparagine 378. Catalysis depends on histidine 384, which acts as the Proton acceptor. Aspartate 441 provides a ligand contact to Zn(2+). Aspartate 442 serves as a coordination point for substrate.

It belongs to the metallo-dependent hydrolases superfamily. Adenosine and AMP deaminases family. ADGF subfamily. In terms of assembly, homodimer. Interacts with adenosine receptors. Binds heparin. The cofactor is Zn(2+). Detected in blood plasma (at protein level). Widely expressed, with most abundant expression in human adult heart, lung, lymphoblasts, and placenta as well as fetal lung, liver, and kidney. In embryo, expressed in the outflow tract and atrium of the developing heart, the VII/VIII cranial nerve ganglion, and the notochord.

Its subcellular location is the secreted. It carries out the reaction adenosine + H2O + H(+) = inosine + NH4(+). Functionally, adenosine deaminase that may contribute to the degradation of extracellular adenosine, a signaling molecule that controls a variety of cellular responses. Requires elevated adenosine levels for optimal enzyme activity. Binds to cell surfaces via proteoglycans and may play a role in the regulation of cell proliferation and differentiation, independently of its enzyme activity. This Homo sapiens (Human) protein is Adenosine deaminase 2.